The following is a 362-amino-acid chain: E3 ubiquitin-protein ligase TM129 (362 aa).

Over 1 to 6 (MESPAV) the chain is Lumenal. A helical membrane pass occupies residues 7 to 27 (TFTLAYVVFSVCFVFTPNEFH). At 28 to 56 (SAGITVQNLLSGWLGSEDVAFVHYHIRRS) the chain is on the cytoplasmic side. Residues 57-77 (SATLLAHSLLPMGYFIGMCFA) traverse the membrane as a helical segment. The Lumenal segment spans residues 78 to 94 (APEKELYNVHKAADGWK). Residues 95 to 115 (VFVLMAVLLPIATSILAFYWS) form a helical membrane-spanning segment. Residues 116–362 (QKRWSNHPLA…FCIVDVCIVR (247 aa)) lie on the Cytoplasmic side of the membrane. The RING-type; degenerate zinc finger occupies 285–350 (CIGCMQTNAN…SSQVPCPTCR (66 aa)).

Belongs to the TMEM129 family. In terms of assembly, integral component of ER-resident dislocation complexes.

It is found in the endoplasmic reticulum membrane. The catalysed reaction is S-ubiquitinyl-[E2 ubiquitin-conjugating enzyme]-L-cysteine + [acceptor protein]-L-lysine = [E2 ubiquitin-conjugating enzyme]-L-cysteine + N(6)-ubiquitinyl-[acceptor protein]-L-lysine.. It functions in the pathway protein modification; protein ubiquitination. In terms of biological role, E3 ubiquitin-protein ligase involved in ER-associated protein degradation, preferentially associates with the E2 enzyme UBE2J2. This is E3 ubiquitin-protein ligase TM129 (tmem129) from Xenopus laevis (African clawed frog).